The following is a 296-amino-acid chain: UDP-N-acetylglucosamine transporter TMEM241 (296 aa).

Helical transmembrane passes span 7 to 29 (LVGL…VLSV), 32 to 52 (FTYP…LLHV), 67 to 87 (SHVL…YAGS), 93 to 113 (LAIP…CGYQ), 121 to 141 (TSPA…CLPF), 146 to 166 (FNPD…AYKI), 187 to 207 (IFSV…FSVL), 211 to 231 (FLYF…GFFL), 250 to 270 (WIFF…DAIL), and 271 to 291 (TSAT…LVFS).

Belongs to the nucleotide-sugar transporter family. SLC35A subfamily.

The protein resides in the golgi apparatus. It localises to the cis-Golgi network membrane. In terms of biological role, golgi-localized UDP-N-acetylglucosamine (UDP-GlcNAc) transporter that transports UDP-N-acetylglucosamine into Golgi lumen. Contributes to lysosomal targeting of NPC2, a key protein required for lysosomal cholesterol exiting, and that utilizes the mannose-6-phosphate (M6P) modification pathway for its lysosomal targeting. The chain is UDP-N-acetylglucosamine transporter TMEM241 from Homo sapiens (Human).